Consider the following 204-residue polypeptide: LexA repressor (204 aa).

The H-T-H motif DNA-binding region spans 29–49; it reads RAEIADIMGFQSKNAASDHLR. Catalysis depends on for autocatalytic cleavage activity residues serine 123 and lysine 160.

The protein belongs to the peptidase S24 family. In terms of assembly, homodimer.

It carries out the reaction Hydrolysis of Ala-|-Gly bond in repressor LexA.. Its function is as follows. Represses a number of genes involved in the response to DNA damage (SOS response), including recA and lexA. In the presence of single-stranded DNA, RecA interacts with LexA causing an autocatalytic cleavage which disrupts the DNA-binding part of LexA, leading to derepression of the SOS regulon and eventually DNA repair. This chain is LexA repressor, found in Alcanivorax borkumensis (strain ATCC 700651 / DSM 11573 / NCIMB 13689 / SK2).